The sequence spans 388 residues: Fetuin-B (388 aa).

A signal peptide spans 1–18; the sequence is MGLLRLLVLCTLAACCMA. 2 consecutive Cystatin fetuin-B-type domains span residues 28–141 and 152–264; these read QRPL…YNCT and TTCP…VTCE. Asn40 is a glycosylation site (N-linked (GlcNAc...) asparagine). 5 disulfide bridges follow: Cys96-Cys107, Cys120-Cys140, Cys154-Cys157, Cys217-Cys224, and Cys237-Cys263. Asn139 carries an N-linked (GlcNAc...) asparagine glycan. 2 disordered regions span residues 270–343 and 367–388; these read AQVP…PQGD and KEQR…VLPP. The span at 279 to 300 shows a compositional bias: polar residues; that stretch reads AVTQGPQKLPQKNTAPTSSPSV. Residues Thr292 and Thr295 are each glycosylated (O-linked (GalNAc...) threonine). Phosphoserine is present on Ser321. Residues 367–381 show a composition bias toward basic and acidic residues; it reads KEQRSAECPGPEKEN.

Belongs to the fetuin family. As to expression, liver, lung and tongue.

The protein localises to the secreted. In terms of biological role, protease inhibitor required for egg fertilization. Required to prevent premature zona pellucida hardening before fertilization, probably by inhibiting the protease activity of ASTL, a protease that mediates the cleavage of ZP2 and triggers zona pellucida hardening. This is Fetuin-B (Fetub) from Mus musculus (Mouse).